A 327-amino-acid polypeptide reads, in one-letter code: Tetraacyldisaccharide 4'-kinase (327 aa).

An ATP-binding site is contributed by 52 to 59; it reads TLGGAGKT.

This sequence belongs to the LpxK family.

The enzyme catalyses a lipid A disaccharide + ATP = a lipid IVA + ADP + H(+). Its pathway is glycolipid biosynthesis; lipid IV(A) biosynthesis; lipid IV(A) from (3R)-3-hydroxytetradecanoyl-[acyl-carrier-protein] and UDP-N-acetyl-alpha-D-glucosamine: step 6/6. Transfers the gamma-phosphate of ATP to the 4'-position of a tetraacyldisaccharide 1-phosphate intermediate (termed DS-1-P) to form tetraacyldisaccharide 1,4'-bis-phosphate (lipid IVA). The polypeptide is Tetraacyldisaccharide 4'-kinase (Methylorubrum populi (strain ATCC BAA-705 / NCIMB 13946 / BJ001) (Methylobacterium populi)).